A 94-amino-acid polypeptide reads, in one-letter code: NADH-ubiquinone oxidoreductase 10.5 kDa subunit (94 aa).

Belongs to the complex I NDUFA2 subunit family. In terms of assembly, complex I is composed of about 40 different subunits.

It localises to the mitochondrion inner membrane. In terms of biological role, accessory subunit of the mitochondrial membrane respiratory chain NADH dehydrogenase (Complex I), that is believed not to be involved in catalysis. Complex I functions in the transfer of electrons from NADH to the respiratory chain. The immediate electron acceptor for the enzyme is believed to be ubiquinone. This chain is NADH-ubiquinone oxidoreductase 10.5 kDa subunit (nuo-10.5), found in Neurospora crassa (strain ATCC 24698 / 74-OR23-1A / CBS 708.71 / DSM 1257 / FGSC 987).